The chain runs to 666 residues: DNA ligase (666 aa).

Residues 31–35, 80–81, and glutamate 110 each bind NAD(+); these read DKEFD and SL. Lysine 112 serves as the catalytic N6-AMP-lysine intermediate. Arginine 133, glutamate 170, lysine 285, and lysine 309 together coordinate NAD(+). Residues cysteine 404, cysteine 407, cysteine 422, and cysteine 428 each contribute to the Zn(2+) site. Positions 588-666 constitute a BRCT domain; the sequence is GYTDKLAGQS…SEDEFLKLIS (79 aa).

It belongs to the NAD-dependent DNA ligase family. LigA subfamily. It depends on Mg(2+) as a cofactor. Mn(2+) serves as cofactor.

The catalysed reaction is NAD(+) + (deoxyribonucleotide)n-3'-hydroxyl + 5'-phospho-(deoxyribonucleotide)m = (deoxyribonucleotide)n+m + AMP + beta-nicotinamide D-nucleotide.. Its function is as follows. DNA ligase that catalyzes the formation of phosphodiester linkages between 5'-phosphoryl and 3'-hydroxyl groups in double-stranded DNA using NAD as a coenzyme and as the energy source for the reaction. It is essential for DNA replication and repair of damaged DNA. The chain is DNA ligase from Bacteroides thetaiotaomicron (strain ATCC 29148 / DSM 2079 / JCM 5827 / CCUG 10774 / NCTC 10582 / VPI-5482 / E50).